The following is a 459-amino-acid chain: Exodeoxyribonuclease 7 large subunit (459 aa).

The protein belongs to the XseA family. In terms of assembly, heterooligomer composed of large and small subunits.

It localises to the cytoplasm. The catalysed reaction is Exonucleolytic cleavage in either 5'- to 3'- or 3'- to 5'-direction to yield nucleoside 5'-phosphates.. In terms of biological role, bidirectionally degrades single-stranded DNA into large acid-insoluble oligonucleotides, which are then degraded further into small acid-soluble oligonucleotides. The sequence is that of Exodeoxyribonuclease 7 large subunit from Pseudomonas entomophila (strain L48).